Here is a 205-residue protein sequence, read N- to C-terminus: Small ribosomal subunit protein uS4 (205 aa).

The segment at 17 to 46 (ENIWGRPKSPVNKREYGPGQHGQRRKGKLS) is disordered. The region spanning 94–157 (SRLDAVVYRA…KQLVIVLESV (64 aa)) is the S4 RNA-binding domain.

Belongs to the universal ribosomal protein uS4 family. In terms of assembly, part of the 30S ribosomal subunit. Contacts protein S5. The interaction surface between S4 and S5 is involved in control of translational fidelity.

Functionally, one of the primary rRNA binding proteins, it binds directly to 16S rRNA where it nucleates assembly of the body of the 30S subunit. In terms of biological role, with S5 and S12 plays an important role in translational accuracy. The protein is Small ribosomal subunit protein uS4 of Mesorhizobium japonicum (strain LMG 29417 / CECT 9101 / MAFF 303099) (Mesorhizobium loti (strain MAFF 303099)).